Consider the following 335-residue polypeptide: Methionine import ATP-binding protein MetN (335 aa).

In terms of domain architecture, ABC transporter spans Ile2–Val241. Gly38–Ser45 contacts ATP.

This sequence belongs to the ABC transporter superfamily. Methionine importer (TC 3.A.1.24) family. The complex is composed of two ATP-binding proteins (MetN), two transmembrane proteins (MetI) and a solute-binding protein (MetQ).

It is found in the cell inner membrane. The catalysed reaction is L-methionine(out) + ATP + H2O = L-methionine(in) + ADP + phosphate + H(+). It catalyses the reaction D-methionine(out) + ATP + H2O = D-methionine(in) + ADP + phosphate + H(+). In terms of biological role, part of the ABC transporter complex MetNIQ involved in methionine import. Responsible for energy coupling to the transport system. The chain is Methionine import ATP-binding protein MetN from Xanthomonas oryzae pv. oryzae (strain MAFF 311018).